We begin with the raw amino-acid sequence, 247 residues long: Carboxy-S-adenosyl-L-methionine synthase (247 aa).

S-adenosyl-L-methionine is bound by residues Tyr-39, 64–66, 89–90, 117–118, Asn-132, and Arg-199; these read GCS, DN, and DI.

This sequence belongs to the class I-like SAM-binding methyltransferase superfamily. Cx-SAM synthase family. Homodimer.

It carries out the reaction prephenate + S-adenosyl-L-methionine = carboxy-S-adenosyl-L-methionine + 3-phenylpyruvate + H2O. Its function is as follows. Catalyzes the conversion of S-adenosyl-L-methionine (SAM) to carboxy-S-adenosyl-L-methionine (Cx-SAM). This is Carboxy-S-adenosyl-L-methionine synthase from Escherichia coli O127:H6 (strain E2348/69 / EPEC).